The chain runs to 143 residues: SsrA-binding protein (143 aa).

It belongs to the SmpB family.

The protein localises to the cytoplasm. In terms of biological role, required for rescue of stalled ribosomes mediated by trans-translation. Binds to transfer-messenger RNA (tmRNA), required for stable association of tmRNA with ribosomes. tmRNA and SmpB together mimic tRNA shape, replacing the anticodon stem-loop with SmpB. tmRNA is encoded by the ssrA gene; the 2 termini fold to resemble tRNA(Ala) and it encodes a 'tag peptide', a short internal open reading frame. During trans-translation Ala-aminoacylated tmRNA acts like a tRNA, entering the A-site of stalled ribosomes, displacing the stalled mRNA. The ribosome then switches to translate the ORF on the tmRNA; the nascent peptide is terminated with the 'tag peptide' encoded by the tmRNA and targeted for degradation. The ribosome is freed to recommence translation, which seems to be the essential function of trans-translation. The chain is SsrA-binding protein from Deinococcus geothermalis (strain DSM 11300 / CIP 105573 / AG-3a).